Here is a 249-residue protein sequence, read N- to C-terminus: LexA repressor (249 aa).

Positions 1–26 are disordered; sequence MAAQATGGRATQRSQQSPAKPKGLTV. Residues 9 to 18 show a composition bias toward polar residues; sequence RATQRSQQSP. The H-T-H motif DNA-binding region spans 48–68; sequence MREIGDTVGLASLSSVTHQLS. Residues Ser173 and Lys210 each act as for autocatalytic cleavage activity in the active site.

Belongs to the peptidase S24 family. Homodimer.

It carries out the reaction Hydrolysis of Ala-|-Gly bond in repressor LexA.. Its function is as follows. Represses a number of genes involved in the response to DNA damage (SOS response), including recA and lexA. In the presence of single-stranded DNA, RecA interacts with LexA causing an autocatalytic cleavage which disrupts the DNA-binding part of LexA, leading to derepression of the SOS regulon and eventually DNA repair. The polypeptide is LexA repressor (Arthrobacter sp. (strain FB24)).